The sequence spans 159 residues: Small heat shock protein hspM (159 aa).

Residues 1-159 (MFVLNFELAG…LSNNIKIQIN (159 aa)) enclose the sHSP domain. The segment at 35-101 (MNNNNKNNLQ…NNNNKSSKTN (67 aa)) is disordered. Composition is skewed to low complexity over residues 36-46 (NNNNKNNLQIN) and 61-95 (SSSS…NNNN).

This sequence belongs to the small heat shock protein (HSP20) family.

The sequence is that of Small heat shock protein hspM (hspM) from Dictyostelium discoideum (Social amoeba).